Here is a 335-residue protein sequence, read N- to C-terminus: MGRLILEHTLQGHKGRIWGVAWHPKGNVFASCGEDKAIRIWSLTGSTWSTKTILSDGHKRTIREIRWSPCGQYLASASFDATTAIWSKSSGEFECNATLEGHENEVKSVSWSRSGGLLATCSRDKSVWIWEVAGDDEFECAAVLNSHTQDVKRVVWHPTKEVLASASYDNTIKMYAEDPVDNDWDCTATLTSHTSTIWGIDFDADGERLVSCSDDTTIKIWKAYHPGNSAGVATPDQQTVWKCVCTLSGQHSRAIYDVSWCKLTGLIATACGDDGIRIFKETSDSKPDEPTFEQLTAEEGAHDQDVNSVQWNPVVAGQLISCSDDGTIKIWKVTE.

WD repeat units lie at residues 12-51 (GHKGRIWGVAWHPKGNVFASCGEDKAIRIWSLTGSTWSTK), 57-96 (GHKRTIREIRWSPCGQYLASASFDATTAIWSKSSGEFECN), 101-140 (GHENEVKSVSWSRSGGLLATCSRDKSVWIWEVAGDDEFEC), 146-185 (SHTQDVKRVVWHPTKEVLASASYDNTIKMYAEDPVDNDWD), 192-231 (SHTSTIWGIDFDADGERLVSCSDDTTIKIWKAYHPGNSAG), 250-289 (QHSRAIYDVSWCKLTGLIATACGDDGIRIFKETSDSKPDE), and 301-335 (AHDQDVNSVQWNPVVAGQLISCSDDGTIKIWKVTE).

Belongs to the WD repeat CIA1 family.

Essential component of the cytosolic iron-sulfur (Fe/S) protein assembly machinery. Required for the maturation of extramitochondrial Fe/S proteins. This Drosophila erecta (Fruit fly) protein is Probable cytosolic iron-sulfur protein assembly protein Ciao1.